Consider the following 239-residue polypeptide: Ribonuclease P protein component 3 (239 aa).

Belongs to the eukaryotic/archaeal RNase P protein component 3 family. As to quaternary structure, consists of a catalytic RNA component and at least 4-5 protein subunits.

The protein localises to the cytoplasm. The catalysed reaction is Endonucleolytic cleavage of RNA, removing 5'-extranucleotides from tRNA precursor.. Its function is as follows. Part of ribonuclease P, a protein complex that generates mature tRNA molecules by cleaving their 5'-ends. The sequence is that of Ribonuclease P protein component 3 from Methanosarcina barkeri (strain Fusaro / DSM 804).